The chain runs to 207 residues: Imidazole glycerol phosphate synthase subunit HisH (207 aa).

Residues 2 to 207 form the Glutamine amidotransferase type-1 domain; sequence RTVVIDYGMG…FKRKAEKLTT (206 aa). Catalysis depends on cysteine 81, which acts as the Nucleophile. Residues histidine 183 and glutamate 185 contribute to the active site.

As to quaternary structure, heterodimer of HisH and HisF.

It is found in the cytoplasm. It carries out the reaction 5-[(5-phospho-1-deoxy-D-ribulos-1-ylimino)methylamino]-1-(5-phospho-beta-D-ribosyl)imidazole-4-carboxamide + L-glutamine = D-erythro-1-(imidazol-4-yl)glycerol 3-phosphate + 5-amino-1-(5-phospho-beta-D-ribosyl)imidazole-4-carboxamide + L-glutamate + H(+). The catalysed reaction is L-glutamine + H2O = L-glutamate + NH4(+). It functions in the pathway amino-acid biosynthesis; L-histidine biosynthesis; L-histidine from 5-phospho-alpha-D-ribose 1-diphosphate: step 5/9. In terms of biological role, IGPS catalyzes the conversion of PRFAR and glutamine to IGP, AICAR and glutamate. The HisH subunit catalyzes the hydrolysis of glutamine to glutamate and ammonia as part of the synthesis of IGP and AICAR. The resulting ammonia molecule is channeled to the active site of HisF. The polypeptide is Imidazole glycerol phosphate synthase subunit HisH (hisH) (Aquifex aeolicus (strain VF5)).